The chain runs to 129 residues: Succinate dehydrogenase cytochrome b556 subunit (129 aa).

The Cytoplasmic portion of the chain corresponds to M1–A26. A helical membrane pass occupies residues S27 to L52. Topologically, residues S53 to F68 are periplasmic. The chain crosses the membrane as a helical span at residues I69–I89. H84 contributes to the heme binding site. The Cytoplasmic portion of the chain corresponds to R90–R108. Residues S109–W129 form a helical membrane-spanning segment.

Belongs to the cytochrome b560 family. As to quaternary structure, part of an enzyme complex containing four subunits: a flavoprotein, an iron-sulfur protein, plus two membrane-anchoring proteins, SdhC and SdhD. The complex can form homotrimers. It depends on heme as a cofactor.

Its subcellular location is the cell inner membrane. Its pathway is carbohydrate metabolism; tricarboxylic acid cycle. Membrane-anchoring subunit of succinate dehydrogenase (SDH). The chain is Succinate dehydrogenase cytochrome b556 subunit (sdhC) from Salmonella typhi.